The following is a 270-amino-acid chain: Glutamate 5-kinase (270 aa).

Lys-17 is an ATP binding site. Ser-57, Asp-144, and Asn-160 together coordinate substrate. ATP is bound by residues 180–181 (SD) and 222–228 (TGGMTSK).

The protein belongs to the glutamate 5-kinase family.

Its subcellular location is the cytoplasm. The enzyme catalyses L-glutamate + ATP = L-glutamyl 5-phosphate + ADP. It functions in the pathway amino-acid biosynthesis; L-proline biosynthesis; L-glutamate 5-semialdehyde from L-glutamate: step 1/2. In terms of biological role, catalyzes the transfer of a phosphate group to glutamate to form L-glutamate 5-phosphate. This chain is Glutamate 5-kinase, found in Lactococcus lactis subsp. lactis (strain IL1403) (Streptococcus lactis).